Consider the following 274-residue polypeptide: Type II restriction enzyme XamI (274 aa).

The catalysed reaction is Endonucleolytic cleavage of DNA to give specific double-stranded fragments with terminal 5'-phosphates.. A P subtype restriction enzyme that recognizes the double-stranded sequence 5'-GTCGAC-3' and cleaves after G-1. The polypeptide is Type II restriction enzyme XamI (xamIR) (Xanthomonas campestris pv. amaranthicola).